Here is a 172-residue protein sequence, read N- to C-terminus: Light-harvesting complex-like protein OHP2, chloroplastic (172 aa).

The transit peptide at 1-43 (MSVASPIQCIRILNPSSSSSSSTASSSFRFSTTTKPCVFIIRC) directs the protein to the chloroplast. Residues 44 to 135 (SQTEGPLRRP…QPKNEISNGR (92 aa)) lie on the Stromal side of the membrane. Residues 45–90 (QTEGPLRRPSAPPTLREPQKPVPPSQPSSSPPPSPPPQKAVAVDGK) form a disordered region. The segment covering 64-82 (KPVPPSQPSSSPPPSPPPQ) has biased composition (pro residues). The chain crosses the membrane as a helical span at residues 136 to 156 (WAMFGFAVGMLTEYATGSDLV). Over 157 to 172 (DQVKILLSNFGILDLE) the chain is Lumenal.

The protein belongs to the ELIP/psbS family. In terms of assembly, component of a high molecular weight complex containing OHP1, OHP2 and HCF244, and PSII core proteins D1/D2, HCF136 and HCF173. Forms a trimeric complex with OHP1 and HCF244 that mutually stabilizes each subunit.

The protein resides in the plastid. It localises to the chloroplast thylakoid membrane. Functionally, may play a photoprotective role within PSI in response to light stress. Forms a trimeric complex with OHP1 and HCF244 that is required to promote PSII core subunit assembly. The trimeric complex forms a transient PSII reaction center-like complex with PsbA, PsbD, PsbE, PsbF and PsbI subunits in thylakoids for early assembly of PSII as well as PSII repair. The trimeric complex is required for the recruitment of ribosomes to the psbA mRNA during PSII biogenesis and repair. Forms a heterodimer with OHP1 that binds chlorophylls and carotenoids, and that may function in the delivery of pigments to the PsbA subunit of PSII. The sequence is that of Light-harvesting complex-like protein OHP2, chloroplastic from Arabidopsis thaliana (Mouse-ear cress).